A 547-amino-acid chain; its full sequence is uncharacterized protein (547 aa).

The segment at 1 to 37 (MSAASSAIPKRSDPRLLDQKKSAKSTLPKNTPENGVS) is disordered. Residues 10 to 21 (KRSDPRLLDQKK) are compositionally biased toward basic and acidic residues. The segment covering 24 to 37 (KSTLPKNTPENGVS) has biased composition (polar residues). 2 consecutive C3H1-type zinc fingers follow at residues 41–67 (NLQH…SHSL) and 68–95 (ETER…HALP). Residues 132–176 (SPSLSSKTMKNPADKANNTTATDVRGNTATSPYFPFSRSPGRHSG) form a disordered region. Residues 147–162 (ANNTTATDVRGNTATS) show a composition bias toward polar residues. Ser343 is modified (phosphoserine). Tyr344 is modified (phosphotyrosine). Phosphoserine occurs at positions 353, 355, 483, 489, 495, and 499. Thr502 carries the phosphothreonine modification. Over residues 526–536 (VANSSPPWNST) the composition is skewed to polar residues. The tract at residues 526–547 (VANSSPPWNSTVEEETPFQMDD) is disordered. Acidic residues predominate over residues 537–547 (VEEETPFQMDD).

This is an uncharacterized protein from Schizosaccharomyces pombe (strain 972 / ATCC 24843) (Fission yeast).